Here is a 373-residue protein sequence, read N- to C-terminus: Queuine tRNA-ribosyltransferase (373 aa).

Catalysis depends on Asp-91, which acts as the Proton acceptor. Substrate-binding positions include 91 to 95 (DSGGF), Asp-145, Gln-187, and Gly-214. The segment at 245–251 (GVGKPED) is RNA binding. The active-site Nucleophile is the Asp-264. The segment at 269 to 273 (TRNAR) is RNA binding; important for wobble base 34 recognition. Zn(2+) is bound by residues Cys-302, Cys-304, Cys-307, and His-333.

The protein belongs to the queuine tRNA-ribosyltransferase family. Homodimer. Within each dimer, one monomer is responsible for RNA recognition and catalysis, while the other monomer binds to the replacement base PreQ1. The cofactor is Zn(2+).

The enzyme catalyses 7-aminomethyl-7-carbaguanine + guanosine(34) in tRNA = 7-aminomethyl-7-carbaguanosine(34) in tRNA + guanine. Its pathway is tRNA modification; tRNA-queuosine biosynthesis. In terms of biological role, catalyzes the base-exchange of a guanine (G) residue with the queuine precursor 7-aminomethyl-7-deazaguanine (PreQ1) at position 34 (anticodon wobble position) in tRNAs with GU(N) anticodons (tRNA-Asp, -Asn, -His and -Tyr). Catalysis occurs through a double-displacement mechanism. The nucleophile active site attacks the C1' of nucleotide 34 to detach the guanine base from the RNA, forming a covalent enzyme-RNA intermediate. The proton acceptor active site deprotonates the incoming PreQ1, allowing a nucleophilic attack on the C1' of the ribose to form the product. After dissociation, two additional enzymatic reactions on the tRNA convert PreQ1 to queuine (Q), resulting in the hypermodified nucleoside queuosine (7-(((4,5-cis-dihydroxy-2-cyclopenten-1-yl)amino)methyl)-7-deazaguanosine). The sequence is that of Queuine tRNA-ribosyltransferase from Idiomarina loihiensis (strain ATCC BAA-735 / DSM 15497 / L2-TR).